Reading from the N-terminus, the 389-residue chain is Na(+)/H(+) antiporter NhaA 1 (389 aa).

A run of 11 helical transmembrane segments spans residues 12–32, 62–82, 97–117, 128–148, 157–177, 184–204, 220–240, 260–280, 282–302, 331–351, and 365–385; these read VLNE…ALLV, FLLW…GLEL, IVLP…LFAL, GWAI…MMCG, IFLL…IAIF, IVAF…NILG, ISVL…AFFI, FWLA…VNLS, IDIG…LFVG, LYGV…IDGL, and LAIL…LKFF.

It belongs to the NhaA Na(+)/H(+) (TC 2.A.33) antiporter family.

The protein resides in the cell inner membrane. The enzyme catalyses Na(+)(in) + 2 H(+)(out) = Na(+)(out) + 2 H(+)(in). In terms of biological role, na(+)/H(+) antiporter that extrudes sodium in exchange for external protons. The chain is Na(+)/H(+) antiporter NhaA 1 from Campylobacter jejuni subsp. jejuni serotype O:6 (strain 81116 / NCTC 11828).